Consider the following 348-residue polypeptide: Zinc transporter ZIP13 (348 aa).

At 1–45 (MMIQTAVAQAKTAPAGPGPWSIKDLVDLQYLDELMSIDNLDVWFC) the chain is on the cytoplasmic side. A helical membrane pass occupies residues 46–66 (SLVGSIAIGLSGIFPLLVIPI). At 67–83 (EAGTALKTEAGCQKLKK) the chain is on the lumenal side. Residues 84-104 (LLSFAIGGLLGDVFLHLLPEA) form a helical membrane-spanning segment. Topologically, residues 105–118 (WAYTSSPGGSHRHY) are cytoplasmic. A helical membrane pass occupies residues 119–139 (CTQGLWVIGGLMSFLTLEKMF). At 140 to 219 (PDEVGDPETK…CIDNFTHGLA (80 aa)) the chain is on the lumenal side. The disordered stretch occupies residues 144-192 (GDPETKTSFQRTTSSSSDLSSQFSVSPQTNGICSNNNSDSKPKTDISPY). A compositionally biased stretch (low complexity) spans 149-169 (KTSFQRTTSSSSDLSSQFSVS). Over residues 170 to 182 (PQTNGICSNNNSD) the composition is skewed to polar residues. Residues 220–240 (VAGSFLVSRKVGFLTTFAILL) form a helical membrane-spanning segment. Positions 241 to 246 (HEIPHE) match the XEXPHE-motif motif. Residues 241 to 262 (HEIPHEVGDFAILLRAGFDRWK) lie on the Cytoplasmic side of the membrane. A helical transmembrane segment spans residues 263–283 (AARMQLSTALGGVLGACFALC). Residues 284-294 (SQSQHGAENAT) lie on the Lumenal side of the membrane. The helical transmembrane segment at 295–315 (TWILPFTSGGFLYIALVNVVP) threads the bilayer. Residues 316-326 (DLLEETNPRNS) lie on the Cytoplasmic side of the membrane. A helical transmembrane segment spans residues 327 to 347 (LLQVLLLFSGIGVMALLSIAM). D348 is a topological domain (lumenal).

Belongs to the ZIP transporter (TC 2.A.5) family. In terms of assembly, homodimer.

It localises to the golgi apparatus membrane. The protein localises to the cytoplasmic vesicle membrane. Its subcellular location is the endoplasmic reticulum membrane. The catalysed reaction is Zn(2+)(in) = Zn(2+)(out). In terms of biological role, functions as a zinc transporter transporting Zn(2+) from the Golgi apparatus to the cytosol and thus influences the zinc level at least in areas of the cytosol. This is Zinc transporter ZIP13 from Danio rerio (Zebrafish).